Reading from the N-terminus, the 371-residue chain is Peptide chain release factor 2 (371 aa).

Residue glutamine 250 is modified to N5-methylglutamine.

This sequence belongs to the prokaryotic/mitochondrial release factor family. Methylated by PrmC. Methylation increases the termination efficiency of RF2.

The protein localises to the cytoplasm. In terms of biological role, peptide chain release factor 2 directs the termination of translation in response to the peptide chain termination codons UGA and UAA. This chain is Peptide chain release factor 2, found in Paramagnetospirillum magneticum (strain ATCC 700264 / AMB-1) (Magnetospirillum magneticum).